The sequence spans 562 residues: F-box and WD repeat domain-containing 11-A (562 aa).

The tract at residues 87–136 is homodimerization domain D; the sequence is GSFDKEKDLCIQLFDQWSESDQVEFVEHLIARMCHYQHGHINSYLKPMLQ. In terms of domain architecture, F-box spans 149–187; sequence DHIAENILSFLDARSLCSAELVCREWQRVISDGMLWKKL. 7 WD repeats span residues 256-295, 296-335, 336-375, 379-418, 419-458, 459-491, and 508-538; these read RSEN…CLKV, LTGH…VLNT, LIHH…DISL, LVGH…FVRT, LNGH…CLRV, LEGH…WDLQ, and LVEH…LIWD.

As to quaternary structure, self-associates. Component of the SCF(FBXW11) complex.

It localises to the cytoplasm. It is found in the nucleus. It functions in the pathway protein modification; protein ubiquitination. Its function is as follows. Substrate recognition component of a SCF (SKP1-CUL1-F-box protein) E3 ubiquitin-protein ligase complex which mediates the ubiquitination and subsequent proteasomal degradation of target proteins. Probably recognizes and binds to phosphorylated target proteins: the interaction with substrates requires the phosphorylation of the two serine residues in the substrates' destruction motif D-S-G-X(2,3,4)-S. SCF(FBXW11) mediates the ubiquitination of phosphorylated CTNNB1 and participates in Wnt signaling regulation. Participates in Wnt signaling regulation, and plays a role in eye and jaw development. SCF(FBXW11) plays a key role in NF-kappa-B activation by mediating ubiquitination of phosphorylated NFKBIA, leading to its degradation by the proteasome, thereby allowing the associated NF-kappa-B complex to translocate into the nucleus and to activate transcription. This is F-box and WD repeat domain-containing 11-A from Danio rerio (Zebrafish).